The sequence spans 488 residues: Ammonium transporter Rh type C-like 2 (488 aa).

The Cytoplasmic portion of the chain corresponds to 1 to 21; that stretch reads MGNCFGSRGICDRPKNTNIRL. The chain crosses the membrane as a helical span at residues 22 to 42; it reads SLPAVCFVWQVSMIILFGVFV. At 43-73 the chain is on the extracellular side; that stretch reads RYNEEADTNWVYTKKEKNITSDIENDFYFRY. Residue Asn-60 is glycosylated (N-linked (GlcNAc...) asparagine). A helical transmembrane segment spans residues 74–94; the sequence is PSFQDVHVMIFVGFGFLMTFL. The Cytoplasmic segment spans residues 95–98; it reads KRYS. Residues 99–119 form a helical membrane-spanning segment; that stretch reads FGAVGFNFLIAAFGLQWALLM. At 120–139 the chain is on the extracellular side; it reads QGWFSPLGDDGKIKIGIENL. The helical transmembrane segment at 140–160 threads the bilayer; the sequence is INADFCVASCLIAYGAVLGKV. At 161–162 the chain is on the cytoplasmic side; it reads SP. A helical membrane pass occupies residues 163–183; that stretch reads VQLLVMTLFGITLYAVEEFII. Topologically, residues 184–191 are extracellular; that stretch reads LRVLNAKD. The chain crosses the membrane as a helical span at residues 192–214; the sequence is AGGSMVIHTFGAYYGLSISRVLY. Residues 215–232 are Cytoplasmic-facing; that stretch reads RPNLNKSKHMNGSVYHSD. Residues 233 to 253 form a helical membrane-spanning segment; the sequence is VFAMIGTLFLWMFWPSFNSAI. Topologically, residues 254–264 are extracellular; the sequence is CNHGDGQHRAA. Residues 265–285 form a helical membrane-spanning segment; the sequence is INTYLALASTVLTTVAISSMF. Residues 286–298 lie on the Cytoplasmic side of the membrane; sequence EKTGKLDMVHIQN. A helical transmembrane segment spans residues 299 to 319; sequence STLAGGVAVGTAAEFMLMPYG. Residue Ser-320 is a topological domain, extracellular. The helical transmembrane segment at 321–341 threads the bilayer; it reads LIVGFFCGIISTLGYIYLTPF. Over 342–356 the chain is Cytoplasmic; that stretch reads LEERLKIQDTCGIHN. A helical transmembrane segment spans residues 357–377; it reads LHAMPGVIGGIVGAISAAAAS. The Extracellular segment spans residues 378-409; the sequence is KEVYGDLGLKNIFSIEGSNVTRLPTVQGGYQA. The chain crosses the membrane as a helical span at residues 410 to 430; sequence AALCVALCFGIGGGTFVGLVL. The Cytoplasmic portion of the chain corresponds to 431-488; the sequence is KLPIWGDPADEHCFNDEMYWEVPEDEESIIPPVLSYNNHMIPNNKHEEMRETNFAEQS.

This sequence belongs to the ammonium transporter (TC 2.A.49) family. Rh subfamily. Homotrimer. In terms of tissue distribution, at larval stages, expressed only in the yolk sac and gill. However, the kidney and the gills are major sites of expression in adults.

The protein resides in the apical cell membrane. Functionally, functions as an ammonia transporter. May play a role in the elimination of ammonia in the gill. The sequence is that of Ammonium transporter Rh type C-like 2 (rhcgl2) from Danio rerio (Zebrafish).